The chain runs to 1198 residues: Structural polyprotein (1198 aa).

Residues 2 to 15 (TKKPGGPGKNRAIN) are interaction with host EXOC1. The interval 37–72 (LLDGRGPVRFVLALITFFKFTALAPTKALLGRWRAV) is hydrophobic; homodimerization of capsid protein C. Positions 106–127 (GGNESSIMWLASLAIVIACAGA) are cleaved as a propeptide — ER anchor for the capsid protein C, removed in mature form by serine protease NS3. A helical membrane pass occupies residues 110-130 (SSIMWLASLAIVIACAGAMKL). Residue asparagine 142 is glycosylated (N-linked (GlcNAc...) asparagine; by host). The next 2 membrane-spanning stretches (helical) occupy residues 254 to 274 (WIIR…MLGS) and 280 to 294 (VVFT…PAYS). 6 cysteine pairs are disulfide-bonded: cysteine 297-cysteine 324, cysteine 354-cysteine 410, cysteine 354-cysteine 415, cysteine 368-cysteine 399, cysteine 386-cysteine 410, and cysteine 386-cysteine 415. Residues 392–405 (DRGWGNGCGLFGKG) are fusion peptide. Asparagine 448 carries an N-linked (GlcNAc...) asparagine; by host glycan. Intrachain disulfides connect cysteine 484/cysteine 581 and cysteine 598/cysteine 629. Transmembrane regions (helical) follow at residues 747-767 (FGGM…WMGV) and 774-794 (IALA…NVHA). 6 disulfides stabilise this stretch: cysteine 798–cysteine 809, cysteine 849–cysteine 937, cysteine 973–cysteine 1017, cysteine 1074–cysteine 1123, cysteine 1085–cysteine 1106, and cysteine 1107–cysteine 1110. Residues asparagine 924 and asparagine 1001 are each glycosylated (N-linked (GlcNAc...) asparagine; by host). Residues 1151-1178 (MIDPFSAGPSGDVSGHPGGPSQEVDGQI) form a disordered region.

In terms of assembly, homodimer. Interacts (via N-terminus) with host EXOC1 (via C-terminus); this interaction results in EXOC1 degradation through the proteasome degradation pathway. Interacts with host CAPRIN1; this interaction is involved in the suppression of the integrated stress response. As to quaternary structure, forms heterodimers with envelope protein E in the endoplasmic reticulum and Golgi. Homodimer; in the endoplasmic reticulum and Golgi. Interacts with protein prM. Interacts with non-structural protein 1. In terms of processing, genome polyprotein: Specific enzymatic cleavages in vivo yield mature proteins. Cleavages in the lumen of endoplasmic reticulum are performed by host signal peptidase, whereas cleavages in the cytoplasmic side are performed by serine protease NS3. Signal cleavage at the 2K-4B site requires a prior NS3 protease-mediated cleavage at the 4A-2K site. Post-translationally, cleaved in post-Golgi vesicles by a host furin, releasing the mature small envelope protein M, and peptide pr. This cleavage is incomplete as up to 30% of viral particles still carry uncleaved prM. N-glycosylated.

The protein localises to the secreted. Its subcellular location is the virion membrane. The protein resides in the host endoplasmic reticulum membrane. Its function is as follows. Plays a role in virus budding by binding to the cell membrane and gathering the viral RNA into a nucleocapsid that forms the core of a mature virus particle. During virus entry, may induce genome penetration into the host cytoplasm after hemifusion induced by the surface proteins. Can migrate to the cell nucleus where it modulates host functions. Overcomes the anti-viral effects of host EXOC1 by sequestering and degrading the latter through the proteasome degradation pathway. Inhibits the integrated stress response (ISR) in the infected cell by binding to host CAPRIN1. In terms of biological role, inhibits RNA silencing by interfering with host Dicer. Prevents premature fusion activity of envelope proteins in trans-Golgi by binding to envelope protein E at pH6.0. After virion release in extracellular space, gets dissociated from E dimers. Functionally, acts as a chaperone for envelope protein E during intracellular virion assembly by masking and inactivating envelope protein E fusion peptide. prM is the only viral peptide matured by host furin in the trans-Golgi network probably to avoid catastrophic activation of the viral fusion activity in acidic Golgi compartment prior to virion release. prM-E cleavage is inefficient, and many virions are only partially matured. These uncleaved prM would play a role in immune evasion. Its function is as follows. May play a role in virus budding. Exerts cytotoxic effects by activating a mitochondrial apoptotic pathway through M ectodomain. May display a viroporin activity. In terms of biological role, binds to host cell surface receptor and mediates fusion between viral and cellular membranes. Envelope protein is synthesized in the endoplasmic reticulum in the form of heterodimer with protein prM. They play a role in virion budding in the ER, and the newly formed immature particle is covered with 60 spikes composed of heterodimer between precursor prM and envelope protein E. The virion is transported to the Golgi apparatus where the low pH causes dissociation of PrM-E heterodimers and formation of E homodimers. prM-E cleavage is inefficient, and many virions are only partially matured. These uncleaved prM would play a role in immune evasion. In Ardeidae (herons), this protein is Structural polyprotein.